Here is a 544-residue protein sequence, read N- to C-terminus: Chaperonin GroEL (544 aa).

Residues 30 to 33, Lys-51, 87 to 91, Gly-415, 479 to 481, and Asp-495 contribute to the ATP site; these read TLGP, DGTTT, and NAA.

This sequence belongs to the chaperonin (HSP60) family. In terms of assembly, forms a cylinder of 14 subunits composed of two heptameric rings stacked back-to-back. Interacts with the co-chaperonin GroES.

The protein resides in the cytoplasm. It carries out the reaction ATP + H2O + a folded polypeptide = ADP + phosphate + an unfolded polypeptide.. Its function is as follows. Together with its co-chaperonin GroES, plays an essential role in assisting protein folding. The GroEL-GroES system forms a nano-cage that allows encapsulation of the non-native substrate proteins and provides a physical environment optimized to promote and accelerate protein folding. This chain is Chaperonin GroEL, found in Acinetobacter baylyi (strain ATCC 33305 / BD413 / ADP1).